A 249-amino-acid chain; its full sequence is Eukaryotic translation initiation factor 3 subunit K (249 aa).

Positions 46–222 constitute a PCI domain; that stretch reads FDCYANLALL…VKVPTNKENE (177 aa).

The protein belongs to the eIF-3 subunit K family. As to quaternary structure, component of the eukaryotic translation initiation factor 3 (eIF-3) complex.

It localises to the cytoplasm. In terms of biological role, component of the eukaryotic translation initiation factor 3 (eIF-3) complex, which is involved in protein synthesis of a specialized repertoire of mRNAs and, together with other initiation factors, stimulates binding of mRNA and methionyl-tRNAi to the 40S ribosome. The eIF-3 complex specifically targets and initiates translation of a subset of mRNAs involved in cell proliferation. This is Eukaryotic translation initiation factor 3 subunit K from Aspergillus fumigatus (strain CBS 144.89 / FGSC A1163 / CEA10) (Neosartorya fumigata).